Here is a 721-residue protein sequence, read N- to C-terminus: Catalase-peroxidase 1 (721 aa).

Positions 98–223 (WHAAGSYRVA…LAAVQMGLIY (126 aa)) form a cross-link, tryptophyl-tyrosyl-methioninium (Trp-Tyr) (with M-249). The active-site Proton acceptor is His99. The tryptophyl-tyrosyl-methioninium (Tyr-Met) (with W-98) cross-link spans 223-249 (YVNPEGVNGQPDPLRTAQDVRVTFGRM). His264 is a heme b binding site.

It belongs to the peroxidase family. Peroxidase/catalase subfamily. In terms of assembly, homodimer or homotetramer. Requires heme b as cofactor. In terms of processing, formation of the three residue Trp-Tyr-Met cross-link is important for the catalase, but not the peroxidase activity of the enzyme.

The enzyme catalyses H2O2 + AH2 = A + 2 H2O. It catalyses the reaction 2 H2O2 = O2 + 2 H2O. Its function is as follows. Bifunctional enzyme with both catalase and broad-spectrum peroxidase activity. The protein is Catalase-peroxidase 1 of Legionella pneumophila (strain Paris).